The chain runs to 118 residues: Small ribosomal subunit protein uS13 (118 aa).

The interval 92–118 (RRGLPVRGQRTKTNARTRKGPRKPIKK) is disordered.

This sequence belongs to the universal ribosomal protein uS13 family. As to quaternary structure, part of the 30S ribosomal subunit. Forms a loose heterodimer with protein S19. Forms two bridges to the 50S subunit in the 70S ribosome.

Its function is as follows. Located at the top of the head of the 30S subunit, it contacts several helices of the 16S rRNA. In the 70S ribosome it contacts the 23S rRNA (bridge B1a) and protein L5 of the 50S subunit (bridge B1b), connecting the 2 subunits; these bridges are implicated in subunit movement. Contacts the tRNAs in the A and P-sites. This chain is Small ribosomal subunit protein uS13, found in Yersinia pestis.